A 445-amino-acid chain; its full sequence is Clusterin (445 aa).

The first 22 residues, Met-1–Gly-22, serve as a signal peptide directing secretion. The Nuclear localization signal motif lies at Lys-78–Lys-81. N-linked (GlcNAc...) asparagine glycosylation is found at Asn-86 and Asn-103. 5 disulfide bridges follow: Cys-102/Cys-309, Cys-113/Cys-301, Cys-116/Cys-298, Cys-121/Cys-291, and Cys-129/Cys-281. The residue at position 133 (Ser-133) is a Phosphoserine. 5 N-linked (GlcNAc...) asparagine glycosylation sites follow: Asn-145, Asn-277, Asn-287, Asn-350, and Asn-370. Ser-392 is subject to Phosphoserine. The Nuclear localization signal motif lies at Arg-439–Arg-443.

It belongs to the clusterin family. Antiparallel disulfide-linked heterodimer of an alpha chain and a beta chain. Self-associates and forms higher oligomers. Interacts with a broad range of misfolded proteins, including APP, APOC2 and LYZ. Slightly acidic pH promotes interaction with misfolded proteins. Forms high-molecular weight oligomers upon interaction with misfolded proteins. Interacts with APOA1, LRP2, CLUAP1 and PON1. Interacts with the complement membrane attack complex. Interacts (via alpha chain) with XRCC6. Interacts with SYVN1, COMMD1, BTRC, CUL1 and with ubiquitin and SCF (SKP1-CUL1-F-box protein) E3 ubiquitin-protein ligase complexes. Interacts (via alpha chain) with BAX in stressed cells, where BAX undergoes a conformation change leading to association with the mitochondrial membrane. Does not interact with BAX in unstressed cells. Found in a complex with LTF, CLU, EPPIN and SEMG1. Interacts (immaturely glycosylated pre-secreted form) with HSPA5; this interaction promotes CLU stability and facilitates stress-induced CLU retrotranslocation from the secretory pathway to the mitochondria, thereby reducing stress-induced apoptosis by stabilizing mitochondrial membrane integrity. Interacts with BCL2L1; this interaction releases and activates BAX and promotes cell death. Interacts with TGFBR2 and ACVR1. Interacts (secreted form) with STMN3; this interaction may act as an important modulator during neuronal differentiation. Interacts with VLDLR and LRP8. In terms of processing, proteolytically cleaved on its way through the secretory system, probably within the Golgi lumen. Proteolytic cleavage is not necessary for its chaperone activity. All non-secreted forms are not proteolytically cleaved. Chaperone activity of uncleaved forms is dependent on a non-reducing environment. This proteolytic maturation is disulfide bond formation dependent. Post-translationally, polyubiquitinated, leading to proteasomal degradation. Under cellular stress, the intracellular level of cleaved form is reduced due to proteasomal degradation. Heavily N-glycosylated. About 30% of the protein mass is comprised of complex N-linked carbohydrate. Endoplasmic reticulum (ER) stress induces changes in glycosylation status and increases level of hypoglycosylated forms. Core carbohydrates are essential for chaperone activity. Non-secreted forms are hypoglycosylated or unglycosylated.

Its subcellular location is the secreted. It is found in the nucleus. The protein resides in the cytoplasm. It localises to the mitochondrion membrane. The protein localises to the cytosol. Its subcellular location is the microsome. It is found in the endoplasmic reticulum. The protein resides in the mitochondrion. It localises to the perinuclear region. The protein localises to the cytoplasmic vesicle. Its subcellular location is the secretory vesicle. It is found in the chromaffin granule. Its function is as follows. Functions as extracellular chaperone that prevents aggregation of non native proteins. Prevents stress-induced aggregation of blood plasma proteins. Inhibits formation of amyloid fibrils by APP, APOC2, B2M, CALCA, CSN3, SNCA and aggregation-prone LYZ variants (in vitro). Does not require ATP. Maintains partially unfolded proteins in a state appropriate for subsequent refolding by other chaperones, such as HSPA8/HSC70. Does not refold proteins by itself. Binding to cell surface receptors triggers internalization of the chaperone-client complex and subsequent lysosomal or proteasomal degradation. When secreted, protects cells against apoptosis and against cytolysis by complement: inhibits assembly of the complement membrane attack complex (MAC) by preventing polymerization of C9 pore component of the MAC complex. Intracellular forms interact with ubiquitin and SCF (SKP1-CUL1-F-box protein) E3 ubiquitin-protein ligase complexes and promote the ubiquitination and subsequent proteasomal degradation of target proteins. Promotes proteasomal degradation of COMMD1 and IKBKB. Modulates NF-kappa-B transcriptional activity. Following stress, promotes apoptosis. Inhibits apoptosis when associated with the mitochondrial membrane by interference with BAX-dependent release of cytochrome c into the cytoplasm. Plays a role in the regulation of cell proliferation. An intracellular form suppresses stress-induced apoptosis by stabilizing mitochondrial membrane integrity through interaction with HSPA5. Secreted form does not affect caspase or BAX-mediated intrinsic apoptosis and TNF-induced NF-kappa-B-activity. Secreted form act as an important modulator during neuronal differentiation through interaction with STMN3. Plays a role in the clearance of immune complexes that arise during cell injury. In Canis lupus familiaris (Dog), this protein is Clusterin (CLU).